Consider the following 63-residue polypeptide: Large ribosomal subunit protein eL37 (63 aa).

Cysteine 20, cysteine 23, cysteine 35, and cysteine 38 together coordinate Zn(2+). The segment at 20–38 (CRRCGRRAFNVKKGYCAAC) adopts a C4-type zinc-finger fold.

This sequence belongs to the eukaryotic ribosomal protein eL37 family. Requires Zn(2+) as cofactor.

In terms of biological role, binds to the 23S rRNA. The polypeptide is Large ribosomal subunit protein eL37 (Thermococcus gammatolerans (strain DSM 15229 / JCM 11827 / EJ3)).